The sequence spans 283 residues: 2-heptyl-4(1H)-quinolone synthase subunit PqsB (283 aa).

Belongs to the thiolase-like superfamily. FabH family. As to quaternary structure, forms a tight complex with PqsC.

It is found in the cytoplasm. Activity of the complex is inhibited by 2-aminoacetophenone (2-AA). In terms of biological role, required for the biosynthesis of the quorum-sensing signaling molecules 2-heptyl-4(1H)-quinolone (HHQ) and 2-heptyl-3-hydroxy-4(1H)-quinolone (Pseudomonas quinolone signal or PQS), which are important for biofilm formation and virulence. The PqsC/PqsB complex catalyzes the condensation of 2-aminobenzoylacetate (2-ABA) and octanoyl-CoA to form HHQ. PqsB, together with PqsC, catalyzes the coupling of 2-ABA with the octanoate group, leading to decarboxylation and dehydration, and resulting in closure of the quinoline ring. PqsB is probably required for the proper folding of PqsC rather than for a direct enzymatic role in the process. This Pseudomonas aeruginosa (strain ATCC 15692 / DSM 22644 / CIP 104116 / JCM 14847 / LMG 12228 / 1C / PRS 101 / PAO1) protein is 2-heptyl-4(1H)-quinolone synthase subunit PqsB.